An 851-amino-acid polypeptide reads, in one-letter code: Venom phosphodiesterase 1 (851 aa).

Residues Met1–Gly23 form the signal peptide. 2 SMB domains span residues Pro30–Thr73 and Gln74–Ser118. 16 cysteine pairs are disulfide-bonded: Cys34–Cys38, Cys34–Cys51, Cys38–Cys69, Cys49–Cys51, Cys49–Cys62, Cys55–Cys61, Cys62–Cys69, Cys78–Cys83, Cys78–Cys95, Cys83–Cys113, Cys93–Cys95, Cys93–Cys106, Cys99–Cys105, Cys106–Cys113, Cys124–Cys170, and Cys132–Cys344. A glycan (N-linked (GlcNAc...) asparagine) is linked at Asn39. A Cell attachment site motif is present at residues Arg58–Ala60. Positions 147 and 185 each coordinate a divalent metal cation. Thr185 functions as the AMP-threonine intermediate in the catalytic mechanism. Residues Asn216, Asn259, and Asn270 are each glycosylated (N-linked (GlcNAc...) asparagine). Position 271 (Lys271) interacts with AMP. Residues Asp305, His309, Asp352, and His353 each coordinate a divalent metal cation. Residue His309 participates in AMP binding. 6 disulfides stabilise this stretch: Cys360-Cys457, Cys408-Cys793, Cys541-Cys599, Cys554-Cys654, Cys556-Cys639, and Cys762-Cys772. Asn405 carries N-linked (GlcNAc...) asparagine glycosylation. His462 is an a divalent metal cation binding site. Asn512, Asn594, Asn674, and Asn745 each carry an N-linked (GlcNAc...) asparagine glycan.

The protein belongs to the nucleotide pyrophosphatase/phosphodiesterase family. In terms of assembly, monomer cleaved in two subunits; disulfide-linked. Is synthesized as a single-chain protein and is subsequently cleaved to form a two-subunit protein held together with disulfide bonds. The cofactor is a divalent metal cation. As to expression, expressed by venom gland.

It localises to the secreted. The catalysed reaction is ADP + H2O = AMP + phosphate + H(+). Hydrolyzes ADP with high activity. Shows weak or no activity on 5'-AMP, 5'-GMP, 3'-AMP, ATP, cAMP, and cGMP. Is devoid of monophosphatase and proteinase activities. Dose-dependently inhibits platelet aggregation induced by ADP and collagen. The chain is Venom phosphodiesterase 1 from Crotalus adamanteus (Eastern diamondback rattlesnake).